Consider the following 417-residue polypeptide: Membrane protein UL43 (417 aa).

Residues 1-21 are disordered; the sequence is MLRNDSHRAVSPEDGQGRVDD. Transmembrane regions (helical) follow at residues 57 to 77, 90 to 110, 119 to 139, 146 to 166, and 175 to 195; these read GPYANAASGAFAVGCAVLGFM, IYAWLKLAAGGAALVLWSLGE, APGPATQCLALGAAYAALLVL, LFLLAPGPLFVGTLGMVVGGL, and WWIGGPAAAALAAAVLAGPGA. A disordered region spans residues 217–254; the sequence is AGESLSRRPPEDPERPGVPGPPSPPTPQRSHGPPADEV. The span at 221–231 shows a compositional bias: basic and acidic residues; it reads LSRRPPEDPER. Residues 232–243 show a composition bias toward pro residues; sequence PGVPGPPSPPTP. Helical transmembrane passes span 263-283, 291-311, 323-343, 348-368, and 389-409; these read ENVWVPVVTFLGAGALAVKTV, PGPGLPLWPQVFLGGHVAVAL, LTDPLLFVHAGLQVINLGLVF, VVVYAALGGAVWISLAQVLGL, and GLFFSVYALGFGVGVLLCPPG.

It belongs to the alphaherpesvirinae HHV-1 UL43 family.

It localises to the membrane. The sequence is that of Membrane protein UL43 from Human herpesvirus 1 (strain 17) (HHV-1).